A 418-amino-acid polypeptide reads, in one-letter code: uncharacterized protein (418 aa).

The span at 282-297 (EEHSSIAKLDSEEKIR) shows a compositional bias: basic and acidic residues. Positions 282 to 346 (EEHSSIAKLD…SASVDDVSEE (65 aa)) are disordered. Low complexity predominate over residues 304–316 (SSTSLSPDPTSDN). The span at 322-337 (WVSSQDTSKNSSNLAS) shows a compositional bias: polar residues.

This is an uncharacterized protein from Schizosaccharomyces pombe (strain 972 / ATCC 24843) (Fission yeast).